Consider the following 340-residue polypeptide: tRNA N6-adenosine threonylcarbamoyltransferase (340 aa).

The Fe cation site is built by His-111 and His-115. Substrate is bound by residues 134 to 138 (LVSGG), Asp-167, Gly-180, and Asn-272. Fe cation is bound at residue Asp-300.

The protein belongs to the KAE1 / TsaD family. The cofactor is Fe(2+).

It localises to the cytoplasm. The enzyme catalyses L-threonylcarbamoyladenylate + adenosine(37) in tRNA = N(6)-L-threonylcarbamoyladenosine(37) in tRNA + AMP + H(+). Its function is as follows. Required for the formation of a threonylcarbamoyl group on adenosine at position 37 (t(6)A37) in tRNAs that read codons beginning with adenine. Is involved in the transfer of the threonylcarbamoyl moiety of threonylcarbamoyl-AMP (TC-AMP) to the N6 group of A37, together with TsaE and TsaB. TsaD likely plays a direct catalytic role in this reaction. The protein is tRNA N6-adenosine threonylcarbamoyltransferase of Proteus mirabilis (strain HI4320).